We begin with the raw amino-acid sequence, 539 residues long: Fucosyltransferase 2 (539 aa).

The Cytoplasmic portion of the chain corresponds to 1 to 5 (MRITE). Residues 6–26 (ILALFMVLVPVSLVIVAMFGY) form a helical; Signal-anchor for type II membrane protein membrane-spanning segment. The Lumenal portion of the chain corresponds to 27 to 539 (DQGNGFVQAS…SWGLKLVDNF (513 aa)). 3 N-linked (GlcNAc...) asparagine glycosylation sites follow: asparagine 44, asparagine 231, and asparagine 482.

Belongs to the glycosyltransferase 37 family. As to expression, expressed in roots, stems, leaves, flowers, siliques and seedlings.

The protein localises to the golgi apparatus. Its subcellular location is the golgi stack membrane. It functions in the pathway protein modification; protein glycosylation. Functionally, may be involved in cell wall biosynthesis. May act as a fucosyltransferase. In Arabidopsis thaliana (Mouse-ear cress), this protein is Fucosyltransferase 2 (FUT2).